Here is an 872-residue protein sequence, read N- to C-terminus: Alanine--tRNA ligase (872 aa).

Residues His-567, His-571, Cys-669, and His-673 each coordinate Zn(2+).

This sequence belongs to the class-II aminoacyl-tRNA synthetase family. Zn(2+) is required as a cofactor.

The protein localises to the cytoplasm. The enzyme catalyses tRNA(Ala) + L-alanine + ATP = L-alanyl-tRNA(Ala) + AMP + diphosphate. Functionally, catalyzes the attachment of alanine to tRNA(Ala) in a two-step reaction: alanine is first activated by ATP to form Ala-AMP and then transferred to the acceptor end of tRNA(Ala). Also edits incorrectly charged Ser-tRNA(Ala) and Gly-tRNA(Ala) via its editing domain. In Streptococcus pneumoniae serotype 2 (strain D39 / NCTC 7466), this protein is Alanine--tRNA ligase.